The sequence spans 126 residues: Heavy metal-associated isoprenylated plant protein 14 (126 aa).

The region spanning Ala-3–Asp-69 is the HMA domain. Cysteine methyl ester is present on Cys-123. Cys-123 carries S-farnesyl cysteine lipidation. Residues Val-124 to Met-126 constitute a propeptide, removed in mature form.

It belongs to the HIPP family.

In terms of biological role, probable heavy-metal-binding protein. The polypeptide is Heavy metal-associated isoprenylated plant protein 14 (Arabidopsis thaliana (Mouse-ear cress)).